The primary structure comprises 807 residues: Leucine--tRNA ligase (807 aa).

The 'HIGH' region motif lies at proline 40–histidine 51. The short motif at lysine 576–serine 580 is the 'KMSKS' region element. Lysine 579 provides a ligand contact to ATP.

It belongs to the class-I aminoacyl-tRNA synthetase family.

The protein resides in the cytoplasm. It carries out the reaction tRNA(Leu) + L-leucine + ATP = L-leucyl-tRNA(Leu) + AMP + diphosphate. The sequence is that of Leucine--tRNA ligase from Chlorobaculum parvum (strain DSM 263 / NCIMB 8327) (Chlorobium vibrioforme subsp. thiosulfatophilum).